The sequence spans 1167 residues: Integrin alpha-E (1167 aa).

The signal sequence occupies residues 1 to 19 (MKWLFHTLLCMASLKPQGA). Over 20–1114 (FNLDVDWAWV…IFLKEEETRS (1095 aa)) the chain is Extracellular. FG-GAP repeat units lie at residues 27 to 81 (AWVT…PDEI) and 84 to 142 (QPVE…LQAQ). A glycan (N-linked (GlcNAc...) asparagine) is linked at Asn-51. 2 cysteine pairs are disulfide-bonded: Cys-72–Cys-83 and Cys-130–Cys-164. Residues 149–192 (EGFLDPGAHVDSGDYCRSKGGSTGEEKKSARRRRTVEEEDEEED) are X-domain (extra domain). Residues 163–191 (YCRSKGGSTGEEKKSARRRRTVEEEDEEE) are disordered. A VWFA domain is found at 193–382 (GTEIAIVLDG…SKLQQHIVHM (190 aa)). N-linked (GlcNAc...) asparagine glycosylation is found at Asn-256, Asn-314, Asn-341, Asn-364, Asn-418, and Asn-437. The stretch at 383–435 (EGTVGDALQYQLAQTGFSAQILDKGQVLLGTVGAFNWSGGALLYSTQNGRGCF) is one FG-GAP 3 repeat. 4 FG-GAP repeats span residues 438-491 (QTAK…REED), 492-552 (AFVR…DASF), 555-619 (AHTL…GLYD), and 623-683 (QQIR…FTPD). Ca(2+)-binding residues include Asp-514, Asp-516, Asp-518, Asp-522, Asp-578, Asn-580, Asp-582, Asp-586, Asp-646, Asn-648, Asp-650, and Asp-654. An intrachain disulfide couples Cys-698 to Cys-754. N-linked (GlcNAc...) asparagine glycosylation is found at Asn-718 and Asn-773. Cys-814 and Cys-820 are oxidised to a cystine. 2 N-linked (GlcNAc...) asparagine glycosylation sites follow: Asn-829 and Asn-846. Cysteines 884 and 898 form a disulfide. Asn-911, Asn-925, Asn-968, and Asn-1013 each carry an N-linked (GlcNAc...) asparagine glycan. 2 disulfides stabilise this stretch: Cys-998-Cys-1023 and Cys-1031-Cys-1047. N-linked (GlcNAc...) asparagine glycans are attached at residues Asn-1055 and Asn-1086. A helical transmembrane segment spans residues 1115–1137 (LPLIIGSSIGGLLVLVVIIAILF). Over 1138–1167 (KCGFFKRKYQQLNLESTRRAQLKADSLLQD) the chain is Cytoplasmic. A GFFKR motif motif is present at residues 1140 to 1144 (GFFKR).

It belongs to the integrin alpha chain family. In terms of assembly, heterodimer of an alpha and a beta subunit. The alpha subunit is composed of a heavy and a light chains linked by a disulfide bond. Alpha-E associates with beta-7.

The protein localises to the membrane. Its function is as follows. Integrin alpha-E/beta-7 is a receptor for E-cadherin. It mediates adhesion of intra-epithelial T-lymphocytes to epithelial cell monolayers. Mice expressing a null mutation of the alpha-E subunit gene exhibit a marked reduction in the numbers of intraepithelial lymphocytes in the gut and in the development of gut-associated lymphoid aggregates, supporting a specific role for this integrin in mediating retention of lymphocytes in the intestinal wall. The protein is Integrin alpha-E (Itgae) of Mus musculus (Mouse).